Consider the following 255-residue polypeptide: MKFLLVVLGFIGFLKDGITVGGESMLRGVYQDKFYQGTYPQNKNDNWLARATLIGKGGWSNFKFLFLSPGGELYGVLNDKIYKGTPPTHDNDNWMGRAKKIGNGGWNQFQFLFFDPNGYLYAVSKDKLYKASPPQSDTDNWIARATEIGSGGWSGFKFLFFHPNGYLYAVHGQQFYKALPPVSNQDNWLARATKIGQGGWDTFKFLFFSSVGTLFGVQGGKFYEDYPPSYAHDNWLARAKLIGNGGWDDFRFLFF.

Positions 1–19 (MKFLLVVLGFIGFLKDGIT) are cleaved as a signal peptide. 5 WD repeats span residues 20-67 (VGGE…FLFL), 68-114 (SPGG…FLFF), 115-161 (DPNG…FLFF), 162-208 (HPNG…FLFF), and 209-255 (SSVG…FLFF).

As to quaternary structure, monomer.

It localises to the secreted. It is found in the cytoplasmic granule. In terms of biological role, lectin that binds specifically to N-acetylglucosamine and N-acetylgalactosamine. Is part of the innate immunity host defense system of the horseshoe crab. The protein is Tachylectin-2 of Tachypleus tridentatus (Japanese horseshoe crab).